The following is a 236-amino-acid chain: Auxin-responsive protein IAA16 (236 aa).

The EAR-like (transcriptional repression) signature appears at 9–13 (LRLGL). The tract at residues 82-110 (KNVMSGQKPTTGDATEGNDKTSGSSGATS) is disordered. Positions 85–94 (MSGQKPTTGD) are enriched in polar residues. The PB1 domain occupies 118-218 (VAYVKVSMDG…SCKRIRIMKG (101 aa)).

Belongs to the Aux/IAA family. In terms of assembly, homodimers and heterodimers.

The protein localises to the nucleus. Aux/IAA proteins are short-lived transcriptional factors that function as repressors of early auxin response genes at low auxin concentrations. Repression is thought to result from the interaction with auxin response factors (ARFs), proteins that bind to the auxin-responsive promoter element (AuxRE). Formation of heterodimers with ARF proteins may alter their ability to modulate early auxin response genes expression. The protein is Auxin-responsive protein IAA16 (IAA16) of Arabidopsis thaliana (Mouse-ear cress).